Reading from the N-terminus, the 76-residue chain is Senegalin (76 aa).

The signal sequence occupies residues 1–22 (MLSLKKSMLLLFFLGMVSFSLA). The propeptide occupies 23–55 (NKRSDGKRADEEGEDKRADEEGEDKRADEEGED). Residues 24 to 54 (KRSDGKRADEEGEDKRADEEGEDKRADEEGE) form a disordered region. Leucine amide is present on Leu75.

Expressed by the skin glands.

The protein localises to the secreted. In terms of biological role, antimicrobial peptide with activity against the Gram-positive bacterium S.aureus NCTC 10788 (MIC=50 um) and the yeast C.albicans NCPF 1467 (MIC=150 uM). Ineffective against the Gram-negative bacterium E.coli NCTC 10418. Induces a dose-dependent contraction of rat urinary bladder smooth muscle (EC50=2.9 nM) and a dose-dependent relaxation of rat tail artery smooth muscle (EC50=37.7 nM). The protein is Senegalin of Kassina senegalensis (Senegal running frog).